A 329-amino-acid chain; its full sequence is MKAAITATANYLPPDILSNHDLELMLDTNDEWIRSRTGIGERRILKDPTKATSYMCGEVARQLLEKRQLAATDIELIIVATITPDMPFPATACLVQDLIGAKNAWAFDLNAACSGFLYALNTAIRFVESGAHKKVMVIGADKMSSIIDYTDRATAILFGDGAGGVLVEPAADDSCGVLDVRLYSDGTNGRERLLMTGGGSRYPASHETVDKKMHYIYQDGRQVFKAAVTAMADVATEIMQRNNLTADDVAYLVPHQANQRIIDAIAERMGVDRAKVVSNVGYYGNTTAGTIPICLAELDANNKLKHGDNLVLVSFGAGYTWGGIYVKWQ.

Catalysis depends on residues Cys113 and His255. The interval 256–260 (QANQR) is ACP-binding. The active site involves Asn285.

Belongs to the thiolase-like superfamily. FabH family. Homodimer.

The protein localises to the cytoplasm. It catalyses the reaction malonyl-[ACP] + acetyl-CoA + H(+) = 3-oxobutanoyl-[ACP] + CO2 + CoA. The protein operates within lipid metabolism; fatty acid biosynthesis. Its function is as follows. Catalyzes the condensation reaction of fatty acid synthesis by the addition to an acyl acceptor of two carbons from malonyl-ACP. Catalyzes the first condensation reaction which initiates fatty acid synthesis and may therefore play a role in governing the total rate of fatty acid production. Possesses both acetoacetyl-ACP synthase and acetyl transacylase activities. Its substrate specificity determines the biosynthesis of branched-chain and/or straight-chain of fatty acids. This chain is Beta-ketoacyl-[acyl-carrier-protein] synthase III, found in Chlorobium chlorochromatii (strain CaD3).